The primary structure comprises 368 residues: Chaperone protein DnaJ (368 aa).

A J domain is found at D5 to G65. A CR-type zinc finger spans residues G125–R207. 8 residues coordinate Zn(2+): C138, C141, C155, C158, C181, C184, C195, and C198. 4 CXXCXGXG motif repeats span residues C138–G145, C155–G162, C181–G188, and C195–G202.

It belongs to the DnaJ family. Homodimer. Zn(2+) serves as cofactor.

The protein resides in the cytoplasm. Participates actively in the response to hyperosmotic and heat shock by preventing the aggregation of stress-denatured proteins and by disaggregating proteins, also in an autonomous, DnaK-independent fashion. Unfolded proteins bind initially to DnaJ; upon interaction with the DnaJ-bound protein, DnaK hydrolyzes its bound ATP, resulting in the formation of a stable complex. GrpE releases ADP from DnaK; ATP binding to DnaK triggers the release of the substrate protein, thus completing the reaction cycle. Several rounds of ATP-dependent interactions between DnaJ, DnaK and GrpE are required for fully efficient folding. Also involved, together with DnaK and GrpE, in the DNA replication of plasmids through activation of initiation proteins. In Lysinibacillus sphaericus (Bacillus sphaericus), this protein is Chaperone protein DnaJ.